The chain runs to 218 residues: Urease accessory protein UreG (218 aa).

22 to 29 (GPVGSGKT) is a GTP binding site.

The protein belongs to the SIMIBI class G3E GTPase family. UreG subfamily. Homodimer. UreD, UreF and UreG form a complex that acts as a GTP-hydrolysis-dependent molecular chaperone, activating the urease apoprotein by helping to assemble the nickel containing metallocenter of UreC. The UreE protein probably delivers the nickel.

Its subcellular location is the cytoplasm. Functionally, facilitates the functional incorporation of the urease nickel metallocenter. This process requires GTP hydrolysis, probably effectuated by UreG. This chain is Urease accessory protein UreG, found in Polaromonas naphthalenivorans (strain CJ2).